Here is a 97-residue protein sequence, read N- to C-terminus: MNSKLTVIVLLALITIASCGLINEKKVQQYLDEKLPNGVVKGALKSLVHKAAKNQNLCAFNVDTVGMCDADCKRQGKAKGVCHGTKCKCDVELSYKK.

The first 19 residues, 1-19 (MNSKLTVIVLLALITIASC), serve as a signal peptide directing secretion. The BetaSPN-type CS-alpha/beta domain maps to 55 to 95 (QNLCAFNVDTVGMCDADCKRQGKAKGVCHGTKCKCDVELSY). Cystine bridges form between C58–C82, C68–C87, and C72–C89.

The protein belongs to the long chain scorpion toxin family. Class 3 subfamily. As to expression, expressed by the venom gland.

It is found in the secreted. Functionally, selectively inhibits Kv1.3/KCNA3 channel (IC(50)=0.95 uM). Both N-terminal and C-terminal domains are likely involved in the interaction with Kv1.3/KCNA3, since neither its N-terminal domain (1-36) nor its C-terminal domain (37-78) block Kv1.3/KCNA3 channel. The chain is Scorpine-like peptide Ev37 from Euscorpiops validus (Scorpion).